The following is a 119-amino-acid chain: Small polypeptide DEVIL 24 (119 aa).

A required for DVL/RTFL small polypeptide activity region spans residues 83 to 114 (SFTSKCTSLMKQQHARLCIIRLCATMLLRSYT). A helical transmembrane segment spans residues 96–113 (HARLCIIRLCATMLLRSY).

Belongs to the DVL/RTFL small polypeptides family.

The protein localises to the cell membrane. In terms of biological role, small polypeptide acting as a regulatory molecule which coordinates cellular responses required for differentiation, growth and development, probably by restricting polar cell proliferation in lateral organs and coordinating socket cell recruitment and differentiation at trichome sites. The chain is Small polypeptide DEVIL 24 from Arabidopsis thaliana (Mouse-ear cress).